The sequence spans 232 residues: Ubiquinone biosynthesis O-methyltransferase (232 aa).

Residues Arg-36, Gly-55, Asp-76, and Leu-120 each contribute to the S-adenosyl-L-methionine site.

This sequence belongs to the methyltransferase superfamily. UbiG/COQ3 family.

It carries out the reaction a 3-demethylubiquinol + S-adenosyl-L-methionine = a ubiquinol + S-adenosyl-L-homocysteine + H(+). It catalyses the reaction a 3-(all-trans-polyprenyl)benzene-1,2-diol + S-adenosyl-L-methionine = a 2-methoxy-6-(all-trans-polyprenyl)phenol + S-adenosyl-L-homocysteine + H(+). The protein operates within cofactor biosynthesis; ubiquinone biosynthesis. Its function is as follows. O-methyltransferase that catalyzes the 2 O-methylation steps in the ubiquinone biosynthetic pathway. In Azotobacter vinelandii (strain DJ / ATCC BAA-1303), this protein is Ubiquinone biosynthesis O-methyltransferase.